We begin with the raw amino-acid sequence, 360 residues long: Homeobox-leucine zipper protein HOX21 (360 aa).

Disordered stretches follow at residues 25–75 (QQAA…SSAQ) and 88–126 (MLGKRPMSYGDGGGGGDEVNGGGEDELSDDGSQAGEKKR). Positions 36–55 (HHHHHHHGHHHEQQQHHHHL) are enriched in basic residues. Residues 56–68 (GPPPPPPPHPHNP) are compositionally biased toward pro residues. A compositionally biased stretch (gly residues) spans 97–109 (GDGGGGGDEVNGG). Positions 121–180 (AGEKKRRLNVEQVRTLEKNFELGNKLEPERKMQLARALGLQPRQVAIWFQNRRARWKTKQ) form a DNA-binding region, homeobox. A leucine-zipper region spans residues 179-223 (KQLEKDYDALKRQLDAVKAENDALLNHNKKLQAEIVALKGREAAS). Disordered stretches follow at residues 233–278 (EASC…GGGG) and 299–328 (GVDIDQLLHSSSGGAGGPKMEHHGGGGNVQ). The span at 234–246 (ASCSNRSENSSEI) shows a compositional bias: polar residues.

Belongs to the HD-ZIP homeobox family. Class I subfamily. As to expression, expressed in seedlings, roots, stems, leaf blades and panicles.

It is found in the nucleus. Its function is as follows. Probable transcription factor. This chain is Homeobox-leucine zipper protein HOX21 (HOX21), found in Oryza sativa subsp. indica (Rice).